The chain runs to 477 residues: tRNA-2-methylthio-N(6)-dimethylallyladenosine synthase (477 aa).

In terms of domain architecture, MTTase N-terminal spans 13 to 130 (GGLFIKTYGC…LPAMIEEALA (118 aa)). Positions 22, 59, 93, 178, 182, and 185 each coordinate [4Fe-4S] cluster. In terms of domain architecture, Radical SAM core spans 164-396 (ESNGVSAFVS…QAMLNEQTAA (233 aa)). The TRAM domain maps to 399-462 (EGMVGTTQRV…ANSLKGKLVA (64 aa)).

It belongs to the methylthiotransferase family. MiaB subfamily. As to quaternary structure, monomer. [4Fe-4S] cluster is required as a cofactor.

Its subcellular location is the cytoplasm. The catalysed reaction is N(6)-dimethylallyladenosine(37) in tRNA + (sulfur carrier)-SH + AH2 + 2 S-adenosyl-L-methionine = 2-methylsulfanyl-N(6)-dimethylallyladenosine(37) in tRNA + (sulfur carrier)-H + 5'-deoxyadenosine + L-methionine + A + S-adenosyl-L-homocysteine + 2 H(+). Functionally, catalyzes the methylthiolation of N6-(dimethylallyl)adenosine (i(6)A), leading to the formation of 2-methylthio-N6-(dimethylallyl)adenosine (ms(2)i(6)A) at position 37 in tRNAs that read codons beginning with uridine. This is tRNA-2-methylthio-N(6)-dimethylallyladenosine synthase from Hydrogenovibrio crunogenus (strain DSM 25203 / XCL-2) (Thiomicrospira crunogena).